A 684-amino-acid polypeptide reads, in one-letter code: UvrABC system protein B (684 aa).

A Helicase ATP-binding domain is found at 30-188 (EGVQRGDRWQ…QELVSLHYVR (159 aa)). 43–50 (GVTGSGKT) contacts ATP. The short motif at 96-119 (YYDFYQPEAYLPALDKYIAKDLRI) is the Beta-hairpin element. Residues 435 to 601 (QIDDLLGEIR…SIIKSVEQVL (167 aa)) enclose the Helicase C-terminal domain. The region spanning 641-676 (YSMAESLRLEMQEAALKMEYEKAAYLRDEITKFEHR) is the UVR domain.

This sequence belongs to the UvrB family. In terms of assembly, forms a heterotetramer with UvrA during the search for lesions. Interacts with UvrC in an incision complex.

Its subcellular location is the cytoplasm. In terms of biological role, the UvrABC repair system catalyzes the recognition and processing of DNA lesions. A damage recognition complex composed of 2 UvrA and 2 UvrB subunits scans DNA for abnormalities. Upon binding of the UvrA(2)B(2) complex to a putative damaged site, the DNA wraps around one UvrB monomer. DNA wrap is dependent on ATP binding by UvrB and probably causes local melting of the DNA helix, facilitating insertion of UvrB beta-hairpin between the DNA strands. Then UvrB probes one DNA strand for the presence of a lesion. If a lesion is found the UvrA subunits dissociate and the UvrB-DNA preincision complex is formed. This complex is subsequently bound by UvrC and the second UvrB is released. If no lesion is found, the DNA wraps around the other UvrB subunit that will check the other stand for damage. The polypeptide is UvrABC system protein B (Chlorobium limicola (strain DSM 245 / NBRC 103803 / 6330)).